Consider the following 102-residue polypeptide: NADH-quinone oxidoreductase subunit K (102 aa).

The next 3 helical transmembrane spans lie at 6–26, 30–50, and 62–82; these read LEHG…GLMV, ILFV…AFVV, and VMFI…LAIL.

The protein belongs to the complex I subunit 4L family. As to quaternary structure, NDH-1 is composed of 13 different subunits. Subunits NuoA, H, J, K, L, M, N constitute the membrane sector of the complex.

Its subcellular location is the cell inner membrane. The enzyme catalyses a quinone + NADH + 5 H(+)(in) = a quinol + NAD(+) + 4 H(+)(out). In terms of biological role, NDH-1 shuttles electrons from NADH, via FMN and iron-sulfur (Fe-S) centers, to quinones in the respiratory chain. The immediate electron acceptor for the enzyme in this species is believed to be ubiquinone. Couples the redox reaction to proton translocation (for every two electrons transferred, four hydrogen ions are translocated across the cytoplasmic membrane), and thus conserves the redox energy in a proton gradient. The protein is NADH-quinone oxidoreductase subunit K of Pseudomonas aeruginosa (strain LESB58).